We begin with the raw amino-acid sequence, 813 residues long: Homeobox-leucine zipper protein ROC4 (813 aa).

The disordered stretch occupies residues 62-112 (EVENEMSRSGSDHLDVVSCGDAGGGGGDDDDDEDAEHGNPPKRKKRYHRHT). The span at 101–112 (PPKRKKRYHRHT) shows a compositional bias: basic residues. A DNA-binding region (homeobox) is located at residues 104-163 (RKKRYHRHTPQQIQELEAMFKECPHPDEKQRAELSKRLGLEPRQVKFWFQNRRTQMKMQL). Residues 152–191 (FQNRRTQMKMQLERHENSLLKQENDKLRSENLSIREATSN) are a coiled coil. The START domain maps to 306–559 (AGIDKSLFLE…LQRQCECLAL (254 aa)).

It belongs to the HD-ZIP homeobox family. Class IV subfamily.

It is found in the nucleus. Functionally, probable transcription factor. The protein is Homeobox-leucine zipper protein ROC4 (ROC4) of Oryza sativa subsp. japonica (Rice).